Reading from the N-terminus, the 181-residue chain is Large ribosomal subunit protein uL5 (181 aa).

This sequence belongs to the universal ribosomal protein uL5 family. In terms of assembly, part of the 50S ribosomal subunit; contacts the 5S rRNA and probably tRNA. Forms a bridge to the 30S subunit in the 70S ribosome.

Functionally, this is one of the proteins that bind and probably mediate the attachment of the 5S RNA into the large ribosomal subunit, where it forms part of the central protuberance. In the 70S ribosome it contacts protein S13 of the 30S subunit (bridge B1b), connecting the 2 subunits; this bridge is implicated in subunit movement. May contact the P site tRNA; the 5S rRNA and some of its associated proteins might help stabilize positioning of ribosome-bound tRNAs. This is Large ribosomal subunit protein uL5 from Methanococcus maripaludis (strain C7 / ATCC BAA-1331).